Consider the following 256-residue polypeptide: Imidazole glycerol phosphate synthase subunit HisF (256 aa).

Catalysis depends on residues D12 and D131.

It belongs to the HisA/HisF family. Heterodimer of HisH and HisF.

It is found in the cytoplasm. It carries out the reaction 5-[(5-phospho-1-deoxy-D-ribulos-1-ylimino)methylamino]-1-(5-phospho-beta-D-ribosyl)imidazole-4-carboxamide + L-glutamine = D-erythro-1-(imidazol-4-yl)glycerol 3-phosphate + 5-amino-1-(5-phospho-beta-D-ribosyl)imidazole-4-carboxamide + L-glutamate + H(+). The protein operates within amino-acid biosynthesis; L-histidine biosynthesis; L-histidine from 5-phospho-alpha-D-ribose 1-diphosphate: step 5/9. IGPS catalyzes the conversion of PRFAR and glutamine to IGP, AICAR and glutamate. The HisF subunit catalyzes the cyclization activity that produces IGP and AICAR from PRFAR using the ammonia provided by the HisH subunit. The sequence is that of Imidazole glycerol phosphate synthase subunit HisF from Ectopseudomonas mendocina (strain ymp) (Pseudomonas mendocina).